The following is a 644-amino-acid chain: Chaperone protein HscA (644 aa).

Belongs to the heat shock protein 70 family.

Functionally, chaperone involved in the maturation of iron-sulfur cluster-containing proteins. Has a low intrinsic ATPase activity which is markedly stimulated by HscB. Involved in the maturation of IscU. The chain is Chaperone protein HscA from Yersinia pseudotuberculosis serotype I (strain IP32953).